Here is an 89-residue protein sequence, read N- to C-terminus: Barrier-to-autointegration factor 1 (89 aa).

The protein belongs to the BAF family. As to quaternary structure, interacts with emr-1 and lem-2. Interacts with lem-4l, leading to decreased phosphorylation by VRK1 and promoting dephosphorylation by protein phosphatase 2A (PP2A). Post-translationally, phosphorylated by vrk-1. Phosphorylation by vrk-1 in mitosis is essential to achieve correct timing of recruitment of nuclear envelope components during nuclear envelope assembly. Dephosphorylated by protein phosphatase 2A (PP2A) following interaction with lem-4l during mitotic exit, leading to mitotic nuclear envelope reassembly.

It localises to the nucleus. DNA-binding protein which plays an essential role in nuclear envelope formation. Required for normal chromosome segregation during mitosis. Associates with the nuclear lamina via its interaction with LEM domain containing proteins emr-1 and lem-2. In association with lem-3, plays a role in radiation-induced DNA damage repair response. The polypeptide is Barrier-to-autointegration factor 1 (baf-1) (Caenorhabditis elegans).